The following is a 284-amino-acid chain: 2,3,4,5-tetrahydropyridine-2,6-dicarboxylate N-succinyltransferase (284 aa).

Positions 111 and 148 each coordinate substrate.

The protein belongs to the transferase hexapeptide repeat family. Homotrimer.

The protein localises to the cytoplasm. The catalysed reaction is (S)-2,3,4,5-tetrahydrodipicolinate + succinyl-CoA + H2O = (S)-2-succinylamino-6-oxoheptanedioate + CoA. It functions in the pathway amino-acid biosynthesis; L-lysine biosynthesis via DAP pathway; LL-2,6-diaminopimelate from (S)-tetrahydrodipicolinate (succinylase route): step 1/3. The protein is 2,3,4,5-tetrahydropyridine-2,6-dicarboxylate N-succinyltransferase of Brucella melitensis biotype 2 (strain ATCC 23457).